A 294-amino-acid polypeptide reads, in one-letter code: Aquaporin NIP1-2 (294 aa).

Residue Met-1 is modified to N-acetylmethionine. 2 helical membrane passes run 54-74 (LMAE…AVAV) and 82-102 (VTLP…VYSL). Residues 111–113 (NPA) carry the NPA 1 motif. The next 3 helical transmembrane spans lie at 133–153 (VISQ…LFGL), 177–197 (SFVI…GVAT), and 201–221 (AIGE…VIIA). The NPA 2 motif lies at 230 to 232 (NPG). A helical membrane pass occupies residues 248–268 (WIYIVSPIVGAVSGAWVYNMV). Residue Ser-283 is modified to Phosphoserine.

Belongs to the MIP/aquaporin (TC 1.A.8) family. NIP (TC 1.A.8.12) subfamily. As to expression, expressed in developing seeds.

The protein resides in the membrane. Water channel probably required to promote glycerol permeability and water transport across cell membranes. The sequence is that of Aquaporin NIP1-2 (NIP1-2) from Arabidopsis thaliana (Mouse-ear cress).